A 118-amino-acid polypeptide reads, in one-letter code: NADPH-dependent 7-cyano-7-deazaguanine reductase (118 aa).

The active-site Thioimide intermediate is Cys34. Asp41 acts as the Proton donor in catalysis. Substrate contacts are provided by residues 56 to 58 (VEL) and 75 to 76 (HE).

The protein belongs to the GTP cyclohydrolase I family. QueF type 1 subfamily.

The protein localises to the cytoplasm. The enzyme catalyses 7-aminomethyl-7-carbaguanine + 2 NADP(+) = 7-cyano-7-deazaguanine + 2 NADPH + 3 H(+). The protein operates within tRNA modification; tRNA-queuosine biosynthesis. Its function is as follows. Catalyzes the NADPH-dependent reduction of 7-cyano-7-deazaguanine (preQ0) to 7-aminomethyl-7-deazaguanine (preQ1). In Halorhodospira halophila (strain DSM 244 / SL1) (Ectothiorhodospira halophila (strain DSM 244 / SL1)), this protein is NADPH-dependent 7-cyano-7-deazaguanine reductase.